Consider the following 217-residue polypeptide: Adenylate kinase (217 aa).

10-15 lines the ATP pocket; sequence GAGKGT. Residues 30-59 form an NMP region; it reads STGDMLRAAVKAGTEMGLAAKKVMDAGGLV. Residues threonine 31, arginine 36, 57 to 59, 85 to 88, and glutamine 92 each bind AMP; these read GLV and GFPR. Positions 122-159 are LID; that stretch reads GRRSHPASGRTYHVKFNPPKVDGVDDVTGEPLVQRDDD. Residues arginine 123 and 132–133 contribute to the ATP site; that span reads TY. Residues arginine 156 and arginine 167 each coordinate AMP. Residue glycine 203 participates in ATP binding.

The protein belongs to the adenylate kinase family. Monomer.

Its subcellular location is the cytoplasm. The enzyme catalyses AMP + ATP = 2 ADP. It participates in purine metabolism; AMP biosynthesis via salvage pathway; AMP from ADP: step 1/1. Functionally, catalyzes the reversible transfer of the terminal phosphate group between ATP and AMP. Plays an important role in cellular energy homeostasis and in adenine nucleotide metabolism. The chain is Adenylate kinase from Leptothrix cholodnii (strain ATCC 51168 / LMG 8142 / SP-6) (Leptothrix discophora (strain SP-6)).